The sequence spans 284 residues: Plastid-lipid-associated protein 6, chloroplastic (284 aa).

Over residues M1–L11 the composition is skewed to low complexity. The interval M1 to V47 is disordered. The transit peptide at M1 to P72 directs the protein to the chloroplast. Phosphoserine occurs at positions 96, 105, 148, 151, and 155.

It belongs to the PAP/fibrillin family. As to quaternary structure, part of the Photosystem II light-harvesting complex (LHCII). Post-translationally, phosphorylated as part of a basal defense response.

The protein localises to the plastid. The protein resides in the chloroplast. Its subcellular location is the plastoglobule. In terms of biological role, required for plastoglobule development and resistance to multiple stresses. Regulates plastoglobule osmiophilic content. May be involved in the transport of lipophilic antioxidants in and out of the plastoglobule. The sequence is that of Plastid-lipid-associated protein 6, chloroplastic from Arabidopsis thaliana (Mouse-ear cress).